The chain runs to 260 residues: Uroplakin-1b (260 aa).

Over 2-15 (AKDDSTVRCFQGLL) the chain is Cytoplasmic. Residues 16 to 36 (IFGNVIIGMCSIALMAECIFF) form a helical membrane-spanning segment. Residues 37-60 (VSDQNSLYPLLEATNNDDIYAAAW) are Extracellular-facing. The helical transmembrane segment at 61-81 (IGMFVGICLFCLSVLGIVGIM) threads the bilayer. The Cytoplasmic portion of the chain corresponds to 82–86 (KSNRK). A helical membrane pass occupies residues 87–107 (ILLVYFILMFIVYAFEVASCI). Residues 108–229 (TAATQRDFFT…ELISGPMNRH (122 aa)) are Extracellular-facing. A helical transmembrane segment spans residues 230 to 250 (AWGVAWFGFAILCWTFWVLLG). Over 251-260 (TMFYWSRIDY) the chain is Cytoplasmic.

Belongs to the tetraspanin (TM4SF) family. In terms of assembly, heterodimer with uroplakin-3A (UPK3A) or uroplakin-3B (UPK3B). Post-translationally, N-glycosylated with high-mannose oligosaccharides. Bladder epithelium.

It is found in the membrane. Component of the asymmetric unit membrane (AUM); a highly specialized biomembrane elaborated by terminally differentiated urothelial cells. May play an important role in normal bladder epithelial physiology, possibly in regulating membrane permeability of superficial umbrella cells or in stabilizing the apical membrane through AUM/cytoskeletal interactions. This chain is Uroplakin-1b (UPK1B), found in Bos taurus (Bovine).